The sequence spans 238 residues: Heme oxygenase 1 (238 aa).

Belongs to the heme oxygenase family.

The catalysed reaction is heme b + 3 reduced [NADPH--hemoprotein reductase] + 3 O2 = biliverdin IXalpha + CO + Fe(2+) + 3 oxidized [NADPH--hemoprotein reductase] + 3 H2O + H(+). In terms of biological role, catalyzes the opening of the heme ring with the release of iron. Key enzyme in the synthesis of the chromophoric part of the photosynthetic antennae. Upon overexpression in E.coli with PCB:ferredoxin oxidoreductase, CpeS and either CpcB or PecB permits synthesis of phycocyanin-coupled CpcB or PecB. The chain is Heme oxygenase 1 (pbsA1) from Nostoc sp. (strain PCC 7120 / SAG 25.82 / UTEX 2576).